Reading from the N-terminus, the 260-residue chain is Ribosomal RNA small subunit methyltransferase G (260 aa).

Residues glycine 94, phenylalanine 99, 117-119 (DST), 145-146 (AE), and arginine 164 contribute to the S-adenosyl-L-methionine site. The segment at 236 to 260 (APTPPPYPRSPGTPKRQPLGQSNRP) is disordered. The segment covering 237–246 (PTPPPYPRSP) has biased composition (pro residues).

This sequence belongs to the methyltransferase superfamily. RNA methyltransferase RsmG family.

The protein resides in the cytoplasm. Its function is as follows. Specifically methylates the N7 position of a guanine in 16S rRNA. In Synechococcus sp. (strain JA-2-3B'a(2-13)) (Cyanobacteria bacterium Yellowstone B-Prime), this protein is Ribosomal RNA small subunit methyltransferase G.